Here is a 305-residue protein sequence, read N- to C-terminus: Syntaxin-112 (305 aa).

At M1 the chain carries N-acetylmethionine. Positions 52–119 form a coiled coil; it reads QEIETIKTLI…TLIETLEKRN (68 aa). In terms of domain architecture, t-SNARE coiled-coil homology spans 210-272; sequence DLKTKERHEA…SGGTNSLYYA (63 aa).

Belongs to the syntaxin family. In terms of assembly, part of the t-SNARE complex.

Vesicle trafficking protein that functions in the secretory pathway. The polypeptide is Syntaxin-112 (SYP112) (Arabidopsis thaliana (Mouse-ear cress)).